We begin with the raw amino-acid sequence, 473 residues long: Hyaluronidase-2 (473 aa).

The first 20 residues, 1–20 (MRAGLGPIITLALVLEVAWA), serve as a signal peptide directing secretion. Disulfide bonds link cysteine 47–cysteine 340 and cysteine 211–cysteine 227. Residues asparagine 74 and asparagine 103 are each glycosylated (N-linked (GlcNAc...) asparagine). Catalysis depends on glutamate 135, which acts as the Proton donor. Residue asparagine 357 is glycosylated (N-linked (GlcNAc...) asparagine). The region spanning 361–439 (ATQYCSWTQC…YLGWGGEQCQ (79 aa)) is the EGF-like domain. Intrachain disulfides connect cysteine 365–cysteine 376, cysteine 370–cysteine 427, and cysteine 429–cysteine 438. The N-linked (GlcNAc...) asparagine glycan is linked to asparagine 390. Residue asparagine 448 is the site of GPI-anchor amidated asparagine; alternate attachment. Asparagine 448 carries N-linked (GlcNAc...) asparagine; alternate glycosylation. A propeptide spans 449 to 473 (ASRAWAGSHLTSLLGLVAVALTWTL) (removed in mature form).

Belongs to the glycosyl hydrolase 56 family. As to quaternary structure, interacts with MST1R. In terms of tissue distribution, widely expressed, with highest expression levels in kidney, lung and liver (at protein level).

Its subcellular location is the cell membrane. It carries out the reaction Random hydrolysis of (1-&gt;4)-linkages between N-acetyl-beta-D-glucosamine and D-glucuronate residues in hyaluronate.. In terms of biological role, catalyzes hyaluronan degradation into small fragments that are endocytosed and degraded in lysosomes by HYAL1 and exoglycosidases. Essential for the breakdown of extracellular matrix hyaluronan. This is Hyaluronidase-2 (Hyal2) from Mus musculus (Mouse).